A 492-amino-acid polypeptide reads, in one-letter code: Sestrin-3 (492 aa).

The tract at residues 62–243 is N-terminal domain; may mediate the alkylhydroperoxide reductase activity; it reads LVEEYSTSGR…VCDLANDNSI (182 aa). The Cysteine sulfenic acid (-SOH) intermediate role is filled by C121. Residues 310 to 492 form a C-terminal domain; mediates TORC1 regulation region; the sequence is PHSDFEDDVI…ALRAITRHLT (183 aa). Residues 386–389, T398, and E463 contribute to the L-leucine site; that span reads TYNT.

Belongs to the sestrin family. As to quaternary structure, interacts with the GATOR2 complex which is composed of MIOS, SEC13, SEH1L, WDR24 and WDR59; the interaction is not regulated by leucine. Interacts with RRAGA, RRAGB, RRAGC and RRAGD; may function as a guanine nucleotide dissociation inhibitor for RRAGs and regulate them. Interacts with the TORC2 complex; through RICTOR. Detected in liver and skeletal muscles.

The protein localises to the cytoplasm. It carries out the reaction a hydroperoxide + L-cysteinyl-[protein] = S-hydroxy-L-cysteinyl-[protein] + an alcohol. Its function is as follows. May function as an intracellular leucine sensor that negatively regulates the TORC1 signaling pathway. May also regulate the insulin-receptor signaling pathway through activation of TORC2. This metabolic regulator may also play a role in protection against oxidative and genotoxic stresses. May prevent the accumulation of reactive oxygen species (ROS) through the alkylhydroperoxide reductase activity born by the N-terminal domain of the protein. The chain is Sestrin-3 from Mus musculus (Mouse).